Reading from the N-terminus, the 225-residue chain is Protein GrpE (225 aa).

Polar residues predominate over residues 1–15; the sequence is MSGDASTPEQDQNVV. Disordered stretches follow at residues 1–48 and 198–225; these read MSGD…DRMQ and VSMGPGPSDPGSAPAEAAAAPDQTAEEA. Low complexity predominate over residues 201–225; the sequence is GPGPSDPGSAPAEAAAAPDQTAEEA.

This sequence belongs to the GrpE family. As to quaternary structure, homodimer.

It is found in the cytoplasm. Functionally, participates actively in the response to hyperosmotic and heat shock by preventing the aggregation of stress-denatured proteins, in association with DnaK and GrpE. It is the nucleotide exchange factor for DnaK and may function as a thermosensor. Unfolded proteins bind initially to DnaJ; upon interaction with the DnaJ-bound protein, DnaK hydrolyzes its bound ATP, resulting in the formation of a stable complex. GrpE releases ADP from DnaK; ATP binding to DnaK triggers the release of the substrate protein, thus completing the reaction cycle. Several rounds of ATP-dependent interactions between DnaJ, DnaK and GrpE are required for fully efficient folding. The protein is Protein GrpE of Synechococcus sp. (strain CC9605).